Reading from the N-terminus, the 1306-residue chain is Signaling mucin MSB2 (1306 aa).

Residues 1–21 (MQFPFACLLSTLVISGSLARA) form the signal peptide. Residues 22–1185 (SPFDFIFGNG…VSTSSKSKKK (1164 aa)) lie on the Extracellular side of the membrane. Residue Asn30 is glycosylated (N-linked (GlcNAc...) asparagine). Disordered regions lie at residues 248–267 (SADF…LSAA), 519–539 (QAGG…SSST), 561–580 (YMAG…LSES), 665–685 (SSIS…SASS), and 709–849 (TSSS…SVSQ). Polar residues predominate over residues 519 to 528 (QAGGSSMTNP). Positions 529-539 (SSSTIVYSSST) are enriched in low complexity. 2 stretches are compositionally biased toward low complexity: residues 665-674 (SSISSEFSPS) and 709-831 (TSSS…TSSQ). A run of 7 repeats spans residues 698-714 (SQVS…SSSV), 715-731 (SQVS…SSSV), 732-748 (SQVS…SSSV), 749-765 (SQVS…SSSV), 766-782 (SQVS…SSSV), 783-799 (SQVS…RSSV), and 800-816 (SQVS…RSSV). A 7 X 17 AA tandem repeats region spans residues 698-816 (SQVSDTSVSY…VPSTSSRSSV (119 aa)). N-linked (GlcNAc...) asparagine glycans are attached at residues Asn859, Asn885, Asn945, Asn1049, and Asn1088. The segment at 1123–1158 (SNSGGSSDGSSSSNSNSGSSGSGSNSNSGVSSSSGN) is disordered. Residue Asn1175 is glycosylated (N-linked (GlcNAc...) asparagine). Residues 1186–1206 (IIGLVIGVVVGGCLYILFMIF) form a helical membrane-spanning segment. Over 1207 to 1306 (AFKYIIRRRI…SQNSLGWNEV (100 aa)) the chain is Cytoplasmic. Residues 1272 to 1291 (LTNNDSTPTRHNTSSSIPKI) are disordered. Ser1300 is subject to Phosphoserine.

Belongs to the HKR1/MSB2 family. Interacts with CDC42 and SHO1. O-glycosylated in the Ser/Thr-rich regions.

The protein localises to the cell membrane. In terms of biological role, plasma membrane signaling mucin that promotes activation of the MAPK for the filamentous growth pathway. Partially redundant with the SHO1 osmosensing branch for the activation of STE11. The protein is Signaling mucin MSB2 (MSB2) of Saccharomyces cerevisiae (strain ATCC 204508 / S288c) (Baker's yeast).